The primary structure comprises 431 residues: Phosphoribosylamine--glycine ligase (431 aa).

One can recognise an ATP-grasp domain in the interval 109 to 316 (KDFLARHGIP…LVDLVEAAID (208 aa)). 135-196 (VREKGAPIVV…EEFLDGEEAS (62 aa)) serves as a coordination point for ATP. Mg(2+)-binding residues include glutamate 286 and asparagine 288.

It belongs to the GARS family. The cofactor is Mg(2+). Mn(2+) serves as cofactor.

The catalysed reaction is 5-phospho-beta-D-ribosylamine + glycine + ATP = N(1)-(5-phospho-beta-D-ribosyl)glycinamide + ADP + phosphate + H(+). It functions in the pathway purine metabolism; IMP biosynthesis via de novo pathway; N(1)-(5-phospho-D-ribosyl)glycinamide from 5-phospho-alpha-D-ribose 1-diphosphate: step 2/2. This Xanthomonas campestris pv. campestris (strain ATCC 33913 / DSM 3586 / NCPPB 528 / LMG 568 / P 25) protein is Phosphoribosylamine--glycine ligase.